The following is a 466-amino-acid chain: Myocardial zonula adherens protein (466 aa).

Over residues M1–L10 the composition is skewed to polar residues. The signal sequence occupies residues M1–G20. A disordered region spans residues M1–S23. 2 coiled-coil regions span residues Q96–Q142 and L174–K418. The Required for DYNLL1-binding signature appears at R424–E425.

The protein belongs to the MYZAP family. Interacts with DSP, MPRIP and TJP1/ZO1. Interaction with MPRIP inhibits the activation of transcription factor SRF. Interacts with GRIN1. Interacts with DYNLL1. Detected in heart, liver, skeletal muscle, placenta, small intestine, lung, prostate and testis. Expressed in arrector pili muscle (at protein level).

The protein localises to the cytoplasm. It is found in the cytoskeleton. It localises to the cell membrane. The protein resides in the myofibril. Its subcellular location is the sarcomere. The protein localises to the i band. It is found in the z line. It localises to the cell junction. Functionally, plays a role in cellular signaling via Rho-related GTP-binding proteins and subsequent activation of transcription factor SRF. Targets TJP1 to cell junctions. In cortical neurons, may play a role in glutaminergic signal transduction through interaction with the NMDA receptor subunit GRIN1. The sequence is that of Myocardial zonula adherens protein (MYZAP) from Homo sapiens (Human).